We begin with the raw amino-acid sequence, 1187 residues long: Non-receptor tyrosine-protein kinase TYK2 (1187 aa).

The region spanning 26–431 (GGLKVLLHWA…GYFRLTADSS (406 aa)) is the FERM domain. A Phosphotyrosine modification is found at Y292. The tract at residues 335 to 366 (KEEGSSGSSGRNPQASLFGKKAKAHKAVGQPA) is disordered. Positions 339–349 (SSGSSGRNPQA) are enriched in polar residues. Residues 450-529 (GIHGPLLEPF…GRSFPSVREL (80 aa)) enclose the SH2; atypical domain. S499 and S525 each carry phosphoserine. The region spanning 589-875 (ITQLSHLGQG…LTRLQPHNLA (287 aa)) is the Protein kinase 1 domain. Y604 bears the Phosphotyrosine mark. The segment at 610–629 (VEGSGDPEEGKMDDEDPLVP) is disordered. Residues 614 to 626 (GDPEEGKMDDEDP) are compositionally biased toward acidic residues. S884 is subject to Phosphoserine. Residues 897–1176 (LKKIRDLGEG…PILKTVHEKY (280 aa)) form the Protein kinase 2 domain. Residues 903–911 (LGEGHFGKV) and K930 each bind ATP. D1023 acts as the Proton acceptor in catalysis. Y1054 is subject to Phosphotyrosine; by autocatalysis. Residue Y1055 is modified to Phosphotyrosine.

The protein belongs to the protein kinase superfamily. Tyr protein kinase family. JAK subfamily. In terms of assembly, interacts (via FERM domain) with JAKMIP1. Interacts with PIK3R1; this interaction is important for cell migration. Interacts with MPL/TPOR. As to quaternary structure, (Microbial infection) Interacts with Epstein-Barr virus protein LMP1; this interaction inhibits TYK2-mediated interferon signaling. (Microbial infection) Interacts with papillomavirus-18 protein E6; this interaction impairs JAK-STAT activation by interferon-alpha. In terms of assembly, (Microbial infection) Interacts with Epstein-Barr virus (EBV) tegument protein BGLF2; this interaction participates in the inhibition of type I IFN signaling by the virus. Phosphorylated. Phosphorylation by JAK1 at Tyr-1054 and Tyr-1055 induces kinase activation. Observed in all cell lines analyzed. Expressed in a variety of lymphoid and non-lymphoid cell lines.

The catalysed reaction is L-tyrosyl-[protein] + ATP = O-phospho-L-tyrosyl-[protein] + ADP + H(+). With respect to regulation, the protein kinase 1 domain (also termed pseudokinase domain) mediates autoinhibition of the TYK2 kinase domain. Its function is as follows. Tyrosine kinase of the non-receptor type involved in numerous cytokines and interferons signaling, which regulates cell growth, development, cell migration, innate and adaptive immunity. Plays both structural and catalytic roles in numerous interleukins and interferons (IFN-alpha/beta) signaling. Associates with heterodimeric cytokine receptor complexes and activates STAT family members including STAT1, STAT3, STAT4 or STAT6. The heterodimeric cytokine receptor complexes are composed of (1) a TYK2-associated receptor chain (IFNAR1, IL12RB1, IL10RB or IL13RA1), and (2) a second receptor chain associated either with JAK1 or JAK2. In response to cytokine-binding to receptors, phosphorylates and activates receptors (IFNAR1, IL12RB1, IL10RB or IL13RA1), creating docking sites for STAT members. In turn, recruited STATs are phosphorylated by TYK2 (or JAK1/JAK2 on the second receptor chain), form homo- and heterodimers, translocate to the nucleus, and regulate cytokine/growth factor responsive genes. Negatively regulates STAT3 activity by promototing phosphorylation at a specific tyrosine that differs from the site used for signaling. In Homo sapiens (Human), this protein is Non-receptor tyrosine-protein kinase TYK2 (TYK2).